The primary structure comprises 1635 residues: U3 small nucleolar RNA-associated protein 10 (1635 aa).

The tract at residues T781–V803 is disordered. The next 2 membrane-spanning stretches (helical) occupy residues P1141–G1161 and I1288–V1308.

The protein belongs to the HEATR1/UTP10 family. Component of the ribosomal small subunit (SSU) processome.

It is found in the nucleus. The protein resides in the nucleolus. Its subcellular location is the membrane. Its function is as follows. Involved in nucleolar processing of pre-18S ribosomal RNA. Involved in ribosome biosynthesis. This Yarrowia lipolytica (strain CLIB 122 / E 150) (Yeast) protein is U3 small nucleolar RNA-associated protein 10.